Here is a 264-residue protein sequence, read N- to C-terminus: Acid phosphatase (264 aa).

An N-terminal signal peptide occupies residues 1–28 (MIKVPRFICMIALTSGILASGLSQSVSA).

The protein belongs to the class A bacterial acid phosphatase family. Mg(2+) serves as cofactor. The cofactor is Zn(2+).

Its subcellular location is the periplasm. The catalysed reaction is a phosphate monoester + H2O = an alcohol + phosphate. This is Acid phosphatase (phoC) from Zymomonas mobilis subsp. mobilis (strain ATCC 31821 / ZM4 / CP4).